The following is a 314-amino-acid chain: tRNA-cytidine(32) 2-sulfurtransferase (314 aa).

Positions serine 58–serine 63 match the PP-loop motif motif. [4Fe-4S] cluster-binding residues include cysteine 133, cysteine 136, and cysteine 224.

Belongs to the TtcA family. As to quaternary structure, homodimer. The cofactor is Mg(2+). It depends on [4Fe-4S] cluster as a cofactor.

The protein resides in the cytoplasm. The enzyme catalyses cytidine(32) in tRNA + S-sulfanyl-L-cysteinyl-[cysteine desulfurase] + AH2 + ATP = 2-thiocytidine(32) in tRNA + L-cysteinyl-[cysteine desulfurase] + A + AMP + diphosphate + H(+). Its pathway is tRNA modification. Catalyzes the ATP-dependent 2-thiolation of cytidine in position 32 of tRNA, to form 2-thiocytidine (s(2)C32). The sulfur atoms are provided by the cysteine/cysteine desulfurase (IscS) system. The polypeptide is tRNA-cytidine(32) 2-sulfurtransferase (Polaromonas naphthalenivorans (strain CJ2)).